Here is a 333-residue protein sequence, read N- to C-terminus: 4-hydroxy-3-methylbut-2-enyl diphosphate reductase (333 aa).

Residue C34 participates in [4Fe-4S] cluster binding. (2E)-4-hydroxy-3-methylbut-2-enyl diphosphate contacts are provided by H63 and H96. Dimethylallyl diphosphate-binding residues include H63 and H96. Residues H63 and H96 each coordinate isopentenyl diphosphate. C118 contributes to the [4Fe-4S] cluster binding site. A (2E)-4-hydroxy-3-methylbut-2-enyl diphosphate-binding site is contributed by H146. A dimethylallyl diphosphate-binding site is contributed by H146. H146 provides a ligand contact to isopentenyl diphosphate. E148 acts as the Proton donor in catalysis. T186 provides a ligand contact to (2E)-4-hydroxy-3-methylbut-2-enyl diphosphate. C216 provides a ligand contact to [4Fe-4S] cluster. (2E)-4-hydroxy-3-methylbut-2-enyl diphosphate is bound by residues S244, S245, N246, and S289. Residues S244, S245, N246, and S289 each coordinate dimethylallyl diphosphate. Isopentenyl diphosphate-binding residues include S244, S245, N246, and S289.

It belongs to the IspH family. It depends on [4Fe-4S] cluster as a cofactor.

The enzyme catalyses isopentenyl diphosphate + 2 oxidized [2Fe-2S]-[ferredoxin] + H2O = (2E)-4-hydroxy-3-methylbut-2-enyl diphosphate + 2 reduced [2Fe-2S]-[ferredoxin] + 2 H(+). The catalysed reaction is dimethylallyl diphosphate + 2 oxidized [2Fe-2S]-[ferredoxin] + H2O = (2E)-4-hydroxy-3-methylbut-2-enyl diphosphate + 2 reduced [2Fe-2S]-[ferredoxin] + 2 H(+). The protein operates within isoprenoid biosynthesis; dimethylallyl diphosphate biosynthesis; dimethylallyl diphosphate from (2E)-4-hydroxy-3-methylbutenyl diphosphate: step 1/1. Its pathway is isoprenoid biosynthesis; isopentenyl diphosphate biosynthesis via DXP pathway; isopentenyl diphosphate from 1-deoxy-D-xylulose 5-phosphate: step 6/6. Functionally, catalyzes the conversion of 1-hydroxy-2-methyl-2-(E)-butenyl 4-diphosphate (HMBPP) into a mixture of isopentenyl diphosphate (IPP) and dimethylallyl diphosphate (DMAPP). Acts in the terminal step of the DOXP/MEP pathway for isoprenoid precursor biosynthesis. In Mycobacterium sp. (strain KMS), this protein is 4-hydroxy-3-methylbut-2-enyl diphosphate reductase.